Consider the following 614-residue polypeptide: UvrABC system protein C (614 aa).

The GIY-YIG domain occupies 19–97 (SLPGCYLWKN…IKKYNPKFNV (79 aa)). The UVR domain occupies 208-243 (ERLVADLKKAMMDASSKMEYERAGFLKQRIEKINQL).

Belongs to the UvrC family. In terms of assembly, interacts with UvrB in an incision complex.

Its subcellular location is the cytoplasm. In terms of biological role, the UvrABC repair system catalyzes the recognition and processing of DNA lesions. UvrC both incises the 5' and 3' sides of the lesion. The N-terminal half is responsible for the 3' incision and the C-terminal half is responsible for the 5' incision. The sequence is that of UvrABC system protein C from Leptospira biflexa serovar Patoc (strain Patoc 1 / Ames).